We begin with the raw amino-acid sequence, 771 residues long: Endoplasmin homolog (771 aa).

The N-terminal stretch at 1 to 24 (MANSSLLRVVLVALLLLGSVTVSA) is a signal peptide. 3 residues coordinate ATP: Asn63, Asp109, and Phe160. Residue Asn63 is glycosylated (N-linked (GlcNAc...) asparagine). Residues 254 to 282 (AATPESAAEERSLDEGAVEEDPDKEGDTQ) are disordered. N-linked (GlcNAc...) asparagine glycans are attached at residues Asn306 and Asn402. The tract at residues 727–771 (ADDSLLPPDDAEYTVSDTETEEEEEQPKVDTNAHEEAETDGEGDL) is disordered. The segment covering 752–762 (QPKVDTNAHEE) has biased composition (basic and acidic residues). Positions 768 to 771 (EGDL) match the Prevents secretion from ER motif.

Belongs to the heat shock protein 90 family. Homotetramer.

It is found in the endoplasmic reticulum. In terms of biological role, molecular chaperone that functions in the processing and transport of secreted proteins. Required for the synthesis of lipophosphoglycan (LPG), a cell surface glycoconjugate. Necessary for the attachment of the galactosyl residue to the mannose within the phosphoglycan repeats of the nascent LPG chain. Also required for addition of phosphoglycan to acid phosphatase. Not required for normal growth. Has ATPase activity. Binds heparin with micromolar affinity which may facilitate infection of host cells. The sequence is that of Endoplasmin homolog from Leishmania donovani.